The chain runs to 281 residues: MSATGGAKSFTPPDIAKAKGKAPIVCLTAYTTPIARLLDPHCDVVLVGDSVGMVMHGLPSTLGVTLDMMIMHGKAVRRGLERALMVVDMPFGSYEEGPEQAFRNAARVMAETGCAAVKLEGGESMAETIRFLTGRGIPVMAHVGLTPQAVNAFGGYQVQGRGEDGDRVMRDAQAVAKAGAFSVVLEKVPEPLARRITKEIPIPTIGIGASPACDGQVLVVDDMLGMFTDFRPKFVKRYAELAEAAEAGIAAYAKDVRQRRFPAPEHVFSDMPKPVKGGEAA.

Residues Asp49 and Asp88 each coordinate Mg(2+). Residues 49–50 (DS), Asp88, and Lys118 each bind 3-methyl-2-oxobutanoate. Glu120 lines the Mg(2+) pocket. Glu186 functions as the Proton acceptor in the catalytic mechanism.

The protein belongs to the PanB family. Homodecamer; pentamer of dimers. The cofactor is Mg(2+).

It is found in the cytoplasm. The enzyme catalyses 3-methyl-2-oxobutanoate + (6R)-5,10-methylene-5,6,7,8-tetrahydrofolate + H2O = 2-dehydropantoate + (6S)-5,6,7,8-tetrahydrofolate. It functions in the pathway cofactor biosynthesis; (R)-pantothenate biosynthesis; (R)-pantoate from 3-methyl-2-oxobutanoate: step 1/2. Functionally, catalyzes the reversible reaction in which hydroxymethyl group from 5,10-methylenetetrahydrofolate is transferred onto alpha-ketoisovalerate to form ketopantoate. The protein is 3-methyl-2-oxobutanoate hydroxymethyltransferase of Chelativorans sp. (strain BNC1).